The primary structure comprises 533 residues: Probable DNA ligase (533 aa).

An ATP-binding site is contributed by E211. Catalysis depends on K213, which acts as the N6-AMP-lysine intermediate. Residues R218, R233, E262, F302, R374, and K380 each contribute to the ATP site. Residues 512–533 (LAGEAAEKGQAEGGGEELEDDG) are disordered.

This sequence belongs to the ATP-dependent DNA ligase family. Mg(2+) serves as cofactor.

The catalysed reaction is ATP + (deoxyribonucleotide)n-3'-hydroxyl + 5'-phospho-(deoxyribonucleotide)m = (deoxyribonucleotide)n+m + AMP + diphosphate.. Functionally, DNA ligase that seals nicks in double-stranded DNA during DNA replication, DNA recombination and DNA repair. This is Probable DNA ligase from Sorangium cellulosum (strain So ce56) (Polyangium cellulosum (strain So ce56)).